The chain runs to 476 residues: Exodeoxyribonuclease 7 large subunit (476 aa).

It belongs to the XseA family. Heterooligomer composed of large and small subunits.

It is found in the cytoplasm. It carries out the reaction Exonucleolytic cleavage in either 5'- to 3'- or 3'- to 5'-direction to yield nucleoside 5'-phosphates.. Bidirectionally degrades single-stranded DNA into large acid-insoluble oligonucleotides, which are then degraded further into small acid-soluble oligonucleotides. The chain is Exodeoxyribonuclease 7 large subunit from Bartonella bacilliformis (strain ATCC 35685 / KC583 / Herrer 020/F12,63).